A 39-amino-acid chain; its full sequence is Potassium channel toxin alpha-KTx 2.2 (39 aa).

Disulfide bonds link Cys7-Cys29, Cys13-Cys34, and Cys17-Cys36. The segment at 37–39 (YPH) is interaction with Kv1.3 channels.

Belongs to the short scorpion toxin superfamily. Potassium channel inhibitor family. Alpha-KTx 02 subfamily. In terms of tissue distribution, expressed by the venom gland.

It is found in the secreted. Its function is as follows. Potent inhibitor of voltage-gated potassium channels such as Kv1.1/KCNA1 (IC(50)=0.144 nM), Kv1.2/KCNA2 (IC(50)=0.675 nM), Kv1.3/KCNA3 (IC(50)=0.23 nM) and Shaker (Kd=160 nM). Suppresses expression of the Kv1.3/KCNA3 channel in lipopolysaccharide (LPS)-stimulated mouse macrophages. Down-regulates secretion of nitric oxide (NO) and inflammatory cytokines, such as TNF-alpha/TNF, IL-1beta/IL1B and IL6, in LPS-stimulated mouse macrophages in a manner dependent on Kv1.3/KCNA3 channel blockage. Reduces activation of MAPK and NF-kappa-B signaling pathways in LPS-stimulated mouse macrophages. Modulates intracellular Ca(2+) signaling in human PMA/ionomycin-triggered T-cells. Interferes with the activation of the MAPK, NF-kappa-B and NFATc1 pathways in human PMA/ionomycin-triggered T-cells. Reduces proliferation of human PMA/ionomycin-triggered T-cells. Down-regulates secretion of cytokines, such as TNF-alpha/TNF and IL2, in human PMA/ionomycin-triggered T-cells. The chain is Potassium channel toxin alpha-KTx 2.2 from Centruroides margaritatus (Central American bark Scorpion).